The sequence spans 511 residues: Ribose import ATP-binding protein RbsA (511 aa).

2 consecutive ABC transporter domains span residues 13 to 249 (VSMD…VGRA) and 260 to 503 (ALGE…AGIA). ATP is bound at residue 45-52 (GENGAGKS).

Belongs to the ABC transporter superfamily. Ribose importer (TC 3.A.1.2.1) family. As to quaternary structure, the complex is composed of an ATP-binding protein (RbsA), two transmembrane proteins (RbsC) and a solute-binding protein (RbsB).

The protein resides in the cell inner membrane. It catalyses the reaction D-ribose(out) + ATP + H2O = D-ribose(in) + ADP + phosphate + H(+). Part of the ABC transporter complex RbsABC involved in ribose import. Responsible for energy coupling to the transport system. In Roseobacter denitrificans (strain ATCC 33942 / OCh 114) (Erythrobacter sp. (strain OCh 114)), this protein is Ribose import ATP-binding protein RbsA.